A 123-amino-acid polypeptide reads, in one-letter code: NADH dehydrogenase [ubiquinone] 1 beta subcomplex subunit 7 (123 aa).

The disordered stretch occupies residues 1 to 32 (MGTKLSVSLEGASTPETAPRVDRPPTFDPQYG). A CHCH domain is found at 59–102 (RDYCAHHLISLMKCQTQNAPFAGHACDGERGAWDKCEYDDHIMR). 2 short sequence motifs (cx9C motif) span residues 62–72 (CAHHLISLMKC) and 84–94 (CDGERGAWDKC). Cystine bridges form between C62–C94 and C72–C84.

Belongs to the complex I NDUFB7 subunit family. As to quaternary structure, complex I is composed of 45 different subunits.

The protein resides in the mitochondrion. Its subcellular location is the mitochondrion inner membrane. The protein localises to the mitochondrion intermembrane space. Its function is as follows. Accessory subunit of the mitochondrial membrane respiratory chain NADH dehydrogenase (Complex I), that is believed not to be involved in catalysis. Complex I functions in the transfer of electrons from NADH to the respiratory chain. The immediate electron acceptor for the enzyme is believed to be ubiquinone. The protein is NADH dehydrogenase [ubiquinone] 1 beta subcomplex subunit 7 of Caenorhabditis elegans.